The following is an 82-amino-acid chain: Small ribosomal subunit protein bS16 (82 aa).

This sequence belongs to the bacterial ribosomal protein bS16 family.

The chain is Small ribosomal subunit protein bS16 from Pasteurella multocida (strain Pm70).